Reading from the N-terminus, the 186-residue chain is Peptidyl-tRNA hydrolase (186 aa).

Residue Y14 coordinates tRNA. H19 acts as the Proton acceptor in catalysis. Residues Y64, N66, and N112 each coordinate tRNA.

It belongs to the PTH family. Monomer.

It is found in the cytoplasm. The catalysed reaction is an N-acyl-L-alpha-aminoacyl-tRNA + H2O = an N-acyl-L-amino acid + a tRNA + H(+). Its function is as follows. Hydrolyzes ribosome-free peptidyl-tRNAs (with 1 or more amino acids incorporated), which drop off the ribosome during protein synthesis, or as a result of ribosome stalling. In terms of biological role, catalyzes the release of premature peptidyl moieties from peptidyl-tRNA molecules trapped in stalled 50S ribosomal subunits, and thus maintains levels of free tRNAs and 50S ribosomes. The chain is Peptidyl-tRNA hydrolase from Bacillus anthracis.